Consider the following 334-residue polypeptide: MTIIVTGAAGFIGSNIVKALNQRGITDIVAVDNLSKGEKFKNLAECEIAHYLDKHEFIRQVREHILPYQNIEAVFHQGACSDTMNHDGLYMMENNYQYTLDLLNWCQDERIPFLYASSAAVYGKGEIFREERELEKPLNVYGYSKFLFDQVLRRRMKEGLTAQVVGFRYFNVYGQHEQHKGRMASVTFHHFHQYREHGYVNLFGSNDGYGNGEQTRDFVSVEDVAKVNLYFFDHPELSGIYNLGTGRSQQFNELAAATVNACRAAEGKPEMSLKELVEEELIRYIPFPDALKGKYQSFTQADITKLREAGYKEEFFDVKSGVDRYVKWMLENLA.

Residues 11-12 (FI), 32-33 (DN), lysine 39, lysine 54, 77-81 (QGACS), and asparagine 94 each bind NADP(+). Tyrosine 141 (proton acceptor) is an active-site residue. Lysine 145 lines the NADP(+) pocket. Residue asparagine 171 participates in substrate binding. NADP(+)-binding residues include valine 172 and lysine 180. Lysine 180 serves as the catalytic Proton acceptor. Substrate is bound by residues arginine 182, histidine 189, 203 to 206 (FGSN), arginine 216, and tyrosine 295.

This sequence belongs to the NAD(P)-dependent epimerase/dehydratase family. HldD subfamily. In terms of assembly, homopentamer. Requires NADP(+) as cofactor.

The catalysed reaction is ADP-D-glycero-beta-D-manno-heptose = ADP-L-glycero-beta-D-manno-heptose. It functions in the pathway nucleotide-sugar biosynthesis; ADP-L-glycero-beta-D-manno-heptose biosynthesis; ADP-L-glycero-beta-D-manno-heptose from D-glycero-beta-D-manno-heptose 7-phosphate: step 4/4. Catalyzes the interconversion between ADP-D-glycero-beta-D-manno-heptose and ADP-L-glycero-beta-D-manno-heptose via an epimerization at carbon 6 of the heptose. This Neisseria meningitidis serogroup C / serotype 2a (strain ATCC 700532 / DSM 15464 / FAM18) protein is ADP-L-glycero-D-manno-heptose-6-epimerase.